Consider the following 287-residue polypeptide: ATP synthase gamma chain (287 aa).

It belongs to the ATPase gamma chain family. In terms of assembly, F-type ATPases have 2 components, CF(1) - the catalytic core - and CF(0) - the membrane proton channel. CF(1) has five subunits: alpha(3), beta(3), gamma(1), delta(1), epsilon(1). CF(0) has three main subunits: a, b and c.

The protein localises to the cell inner membrane. Produces ATP from ADP in the presence of a proton gradient across the membrane. The gamma chain is believed to be important in regulating ATPase activity and the flow of protons through the CF(0) complex. The sequence is that of ATP synthase gamma chain from Klebsiella pneumoniae subsp. pneumoniae (strain ATCC 700721 / MGH 78578).